The following is a 196-amino-acid chain: MNFMKNLTRGIIRENPTFVLVLGMCPTLAVTTSAINGMGMGLATMLVLIGSNVAISALRKVIPDNIRIPAFVVVIASFVTIVGMLMKAYVPALDAALGIFIPLIVVNCIILARAEAFAFSNGIADSFADAVGMGLGFTLALTILGSIREILGAGSIFGFSLFGAAYEPVLLMILPPGAFLTLGLLIGLINWKTKKA.

Transmembrane regions (helical) follow at residues 38-58 (MGMGLATMLVLIGSNVAISAL), 68-88 (IPAFVVVIASFVTIVGMLMKA), 92-112 (ALDAALGIFIPLIVVNCIILA), 127-147 (FADAVGMGLGFTLALTILGSI), and 169-189 (VLLMILPPGAFLTLGLLIGLI).

It belongs to the NqrDE/RnfAE family. As to quaternary structure, the complex is composed of six subunits: RnfA, RnfB, RnfC, RnfD, RnfE and RnfG.

The protein resides in the cell membrane. The enzyme catalyses 2 reduced [2Fe-2S]-[ferredoxin] + Na(+)(in) + NAD(+) + H(+) = 2 oxidized [2Fe-2S]-[ferredoxin] + Na(+)(out) + NADH. Its function is as follows. Part of a membrane-bound complex that couples electron transfer with translocation of ions across the membrane. Couples electron transfer from reduced ferredoxin to NAD(+) with electrogenic movement of Na(+) out of the cell. Involved in caffeate respiration. This chain is Na(+)-translocating ferredoxin:NAD(+) oxidoreductase complex subunit E, found in Acetobacterium woodii (strain ATCC 29683 / DSM 1030 / JCM 2381 / KCTC 1655 / WB1).